The following is a 335-amino-acid chain: Peflin (335 aa).

The span at 23-37 (AMEETRREFEKEKQR) shows a compositional bias: basic and acidic residues. The segment at 23–92 (AMEETRREFE…SPRHTKTPVD (70 aa)) is disordered. Polar residues predominate over residues 43-53 (VTQAQTPNTRV). 5 consecutive EF-hand domains span residues 144-192 (KVAP…DDNS), 198-223 (SVDA…IALY), 224-259 (KRVK…LGYL), 260-300 (IPFE…LMRL), and 301-332 (TKLF…LGRF). Residues aspartate 170, arginine 176, and glutamate 181 each coordinate Ca(2+). Ca(2+)-binding residues include aspartate 237, asparagine 239, serine 241, threonine 243, and glutamate 248.

Homodimer.

The protein localises to the cytoplasm. Its subcellular location is the nucleus. The protein resides in the bud tip. It localises to the bud neck. Its function is as follows. Calcium-binding protein that is required for polar bud growth and cell wall abscission. Can also bind zinc ions. The polypeptide is Peflin (PEF1) (Saccharomyces cerevisiae (strain ATCC 204508 / S288c) (Baker's yeast)).